The sequence spans 483 residues: Keratin, type II cytoskeletal 8 (483 aa).

The span at 1–25 (MSVRVTQKSYKMSTSGPRAFSSRSF) shows a compositional bias: polar residues. A disordered region spans residues 1-43 (MSVRVTQKSYKMSTSGPRAFSSRSFTSGPGARISSSSFSRVGS). Residues 1 to 90 (MSVRVTQKSY…DPNIQAVRTQ (90 aa)) are head. At Ser9 the chain carries Phosphoserine; by PKC/PRKCE. Lys11 participates in a covalent cross-link: Glycyl lysine isopeptide (Lys-Gly) (interchain with G-Cter in SUMO2). Phosphoserine occurs at positions 13, 15, 21, and 22. Omega-N-methylarginine is present on Arg23. A Phosphoserine; by PKC/PRKCE modification is found at Ser24. Ser24 is modified (phosphoserine). Thr26 is modified (phosphothreonine). The span at 26–43 (TSGPGARISSSSFSRVGS) shows a compositional bias: low complexity. At Ser27 the chain carries Phosphoserine. The residue at position 32 (Arg32) is an Omega-N-methylarginine. Ser34, Ser37, and Ser39 each carry phosphoserine. At Arg40 the chain carries Omega-N-methylarginine. Residues Ser43, Ser44, and Ser47 each carry the phosphoserine modification. Arg49 bears the Asymmetric dimethylarginine; alternate mark. Arg49 is subject to Omega-N-methylarginine; alternate. Phosphoserine is present on Ser51. The interval 91-126 (EKEQIKTLNNKFASFIDKVRFLEQQNKMLETKWSLL) is coil 1A. Positions 91-402 (EKEQIKTLNN…KLLEGEESRL (312 aa)) constitute an IF rod domain. Lys101 carries the post-translational modification N6-malonyllysine. Glycyl lysine isopeptide (Lys-Gly) (interchain with G-Cter in SUMO2) cross-links involve residues Lys122 and Lys130. The segment at 127–143 (QQQKTSRSNMDNMFESY) is linker 1. The segment at 144–235 (INNLRRQLEA…QIHEEEIREL (92 aa)) is coil 1B. Lys197 participates in a covalent cross-link: Glycyl lysine isopeptide (Lys-Gly) (interchain with G-Cter in SUMO1); alternate. Lys197 participates in a covalent cross-link: Glycyl lysine isopeptide (Lys-Gly) (interchain with G-Cter in SUMO2); alternate. The residue at position 207 (Lys207) is an N6-acetyllysine. The tract at residues 236–259 (QSQISDTSVVLSMDNSRSLDMDSI) is linker 12. 3 positions are modified to phosphoserine: Ser253, Ser258, and Ser274. A coil 2 region spans residues 260–398 (IAEVRAQYEE…ATYRKLLEGE (139 aa)). A necessary for interaction with PNN region spans residues 261–382 (AEVRAQYEEI…EYQELMNVKL (122 aa)). Lys285 is covalently cross-linked (Glycyl lysine isopeptide (Lys-Gly) (interchain with G-Cter in SUMO2)). Lys295 is covalently cross-linked (Glycyl lysine isopeptide (Lys-Gly) (interchain with G-Cter in SUMO2); alternate). An N6-acetyllysine; alternate modification is found at Lys295. Lys304 is covalently cross-linked (Glycyl lysine isopeptide (Lys-Gly) (interchain with G-Cter in SUMO2)). Lys325 participates in a covalent cross-link: Glycyl lysine isopeptide (Lys-Gly) (interchain with G-Cter in SUMO2); alternate. Lys325 bears the N6-acetyllysine; alternate mark. Residue Lys393 forms a Glycyl lysine isopeptide (Lys-Gly) (interchain with G-Cter in SUMO2) linkage. The tract at residues 399–483 (ESRLESGMQN…VSESSDIMSK (85 aa)) is tail. Residues Ser400, Ser404, Ser410, Ser417, Ser424, Ser426, and Ser432 each carry the phosphoserine modification. A Glycyl lysine isopeptide (Lys-Gly) (interchain with G-Cter in SUMO1); alternate cross-link involves residue Lys472. Lys472 participates in a covalent cross-link: Glycyl lysine isopeptide (Lys-Gly) (interchain with G-Cter in SUMO2); alternate. Phosphoserine is present on residues Ser475, Ser477, Ser478, and Ser482.

The protein belongs to the intermediate filament family. Heterotetramer of two type I and two type II keratins. Forms a heterodimer with KRT18. Associates with KRT20. Interacts with PNN. When associated with KRT19, interacts with DMD. Interacts with TCHP. Interacts with APEX1. Interacts with GPER1. Interacts with EPPK1. Interacts with PKP1 and PKP2. In terms of processing, O-glycosylated. O-GlcNAcylation at multiple sites increases solubility, and decreases stability by inducing proteasomal degradation. O-glycosylated (O-GlcNAcylated), in a cell cycle-dependent manner. As to expression, expressed in cardiac and striated muscle. Expressed at Z-lines within the muscle fibers and at Z-line and M-line domains at costameres at the sarcolemmal membrane (at protein level). Observed in coagulating gland, bladder, salivary gland, kidney, spleen, thymus, lung and heart. Also observed in ventral prostate, seminal vesicle and liver where expression increases following castration.

Its subcellular location is the cytoplasm. The protein localises to the nucleus. It is found in the nucleoplasm. It localises to the nucleus matrix. In terms of biological role, together with KRT19, helps to link the contractile apparatus to dystrophin at the costameres of striated muscle. In Rattus norvegicus (Rat), this protein is Keratin, type II cytoskeletal 8 (Krt8).